A 58-amino-acid chain; its full sequence is Small ribosomal subunit protein bS21 (58 aa).

Residues 28 to 58 form a disordered region; that stretch reads VLQDIRKHEHYEKPSIKKKKKSEAARKKKRF. The span at 31-42 shows a compositional bias: basic and acidic residues; sequence DIRKHEHYEKPS. Residues 43–58 show a composition bias toward basic residues; that stretch reads IKKKKKSEAARKKKRF.

The protein belongs to the bacterial ribosomal protein bS21 family.

This is Small ribosomal subunit protein bS21 from Syntrophomonas wolfei subsp. wolfei (strain DSM 2245B / Goettingen).